The primary structure comprises 460 residues: Cysteine--tRNA ligase (460 aa).

C28 contributes to the Zn(2+) binding site. Positions 30 to 40 (MTVYDYCHLGH) match the 'HIGH' region motif. Zn(2+) contacts are provided by C209, H234, and E238. The 'KMSKS' region signature appears at 266–270 (KMSKS). K269 lines the ATP pocket.

Belongs to the class-I aminoacyl-tRNA synthetase family. In terms of assembly, monomer. Requires Zn(2+) as cofactor.

It is found in the cytoplasm. The catalysed reaction is tRNA(Cys) + L-cysteine + ATP = L-cysteinyl-tRNA(Cys) + AMP + diphosphate. The polypeptide is Cysteine--tRNA ligase (Thioalkalivibrio sulfidiphilus (strain HL-EbGR7)).